Consider the following 360-residue polypeptide: Phospho-N-acetylmuramoyl-pentapeptide-transferase (360 aa).

10 helical membrane-spanning segments follow: residues 21–41, 74–94, 97–117, 135–155, 168–188, 199–219, 236–256, 263–283, 288–308, and 338–358; these read YVTF…LWWG, MGGI…GDLA, YVWV…IDDY, ILQS…ADLV, IMPQ…VGSS, GLAI…AYLS, AGEL…FLWF, VFMG…IAVL, ILLV…ILQV, and VIVR…ATLK.

Belongs to the glycosyltransferase 4 family. MraY subfamily. Mg(2+) serves as cofactor.

Its subcellular location is the cell inner membrane. The enzyme catalyses UDP-N-acetyl-alpha-D-muramoyl-L-alanyl-gamma-D-glutamyl-meso-2,6-diaminopimeloyl-D-alanyl-D-alanine + di-trans,octa-cis-undecaprenyl phosphate = di-trans,octa-cis-undecaprenyl diphospho-N-acetyl-alpha-D-muramoyl-L-alanyl-D-glutamyl-meso-2,6-diaminopimeloyl-D-alanyl-D-alanine + UMP. It participates in cell wall biogenesis; peptidoglycan biosynthesis. Catalyzes the initial step of the lipid cycle reactions in the biosynthesis of the cell wall peptidoglycan: transfers peptidoglycan precursor phospho-MurNAc-pentapeptide from UDP-MurNAc-pentapeptide onto the lipid carrier undecaprenyl phosphate, yielding undecaprenyl-pyrophosphoryl-MurNAc-pentapeptide, known as lipid I. In Shewanella sediminis (strain HAW-EB3), this protein is Phospho-N-acetylmuramoyl-pentapeptide-transferase.